The sequence spans 492 residues: Katanin p60 ATPase-containing subunit A1 (492 aa).

Residues 80–186 (STPPKASQQE…ESEPKKFDST (107 aa)) are disordered. Residues 145–171 (PNDKGKAVRGREKKDQQNKGKEEKSKS) are compositionally biased toward basic and acidic residues. 250-257 (GPPGTGKT) contributes to the ATP binding site.

Belongs to the AAA ATPase family. Katanin p60 subunit A1 subfamily. Can homooligomerize into hexameric rings, which may be promoted by interaction with microtubules. Interacts with KATNB1, which may serve as a targeting subunit.

The protein resides in the cytoplasm. It is found in the cytoskeleton. The protein localises to the microtubule organizing center. Its subcellular location is the centrosome. It localises to the spindle pole. The protein resides in the spindle. It carries out the reaction n ATP + n H2O + a microtubule = n ADP + n phosphate + (n+1) alpha/beta tubulin heterodimers.. With respect to regulation, ATPase activity is stimulated by microtubules, which promote homooligomerization. ATP-dependent microtubule severing is stimulated by interaction with KATNB1. In terms of biological role, catalytic subunit of a complex which severs microtubules in an ATP-dependent manner. Microtubule severing may promote rapid reorganization of cellular microtubule arrays and the release of microtubules from the centrosome following nucleation. The polypeptide is Katanin p60 ATPase-containing subunit A1 (Gallus gallus (Chicken)).